The sequence spans 137 residues: ATP synthase epsilon chain (137 aa).

Belongs to the ATPase epsilon chain family. F-type ATPases have 2 components, CF(1) - the catalytic core - and CF(0) - the membrane proton channel. CF(1) has five subunits: alpha(3), beta(3), gamma(1), delta(1), epsilon(1). CF(0) has three main subunits: a, b and c.

It localises to the cell inner membrane. In terms of biological role, produces ATP from ADP in the presence of a proton gradient across the membrane. The polypeptide is ATP synthase epsilon chain (Ruegeria sp. (strain TM1040) (Silicibacter sp.)).